Here is a 343-residue protein sequence, read N- to C-terminus: Holliday junction branch migration complex subunit RuvB (343 aa).

The tract at residues 1 to 181 is large ATPase domain (RuvB-L); that stretch reads MDRIVEIEKV…FGMQFRLQFY (181 aa). ATP-binding positions include Leu20, Arg21, Gly62, Lys65, Thr66, Thr67, 128–130, Arg171, Tyr181, and Arg218; that span reads EDF. Position 66 (Thr66) interacts with Mg(2+). The small ATPAse domain (RuvB-S) stretch occupies residues 182–252; it reads TDNELARIIS…RAKSSLDSLG (71 aa). The interval 255–343 is head domain (RuvB-H); it reads DLGFDEMDLK…EKQNKGLFNE (89 aa). Residues Arg308 and Arg313 each contribute to the DNA site.

Belongs to the RuvB family. Homohexamer. Forms an RuvA(8)-RuvB(12)-Holliday junction (HJ) complex. HJ DNA is sandwiched between 2 RuvA tetramers; dsDNA enters through RuvA and exits via RuvB. An RuvB hexamer assembles on each DNA strand where it exits the tetramer. Each RuvB hexamer is contacted by two RuvA subunits (via domain III) on 2 adjacent RuvB subunits; this complex drives branch migration. In the full resolvosome a probable DNA-RuvA(4)-RuvB(12)-RuvC(2) complex forms which resolves the HJ.

The protein resides in the cytoplasm. The catalysed reaction is ATP + H2O = ADP + phosphate + H(+). Functionally, the RuvA-RuvB-RuvC complex processes Holliday junction (HJ) DNA during genetic recombination and DNA repair, while the RuvA-RuvB complex plays an important role in the rescue of blocked DNA replication forks via replication fork reversal (RFR). RuvA specifically binds to HJ cruciform DNA, conferring on it an open structure. The RuvB hexamer acts as an ATP-dependent pump, pulling dsDNA into and through the RuvAB complex. RuvB forms 2 homohexamers on either side of HJ DNA bound by 1 or 2 RuvA tetramers; 4 subunits per hexamer contact DNA at a time. Coordinated motions by a converter formed by DNA-disengaged RuvB subunits stimulates ATP hydrolysis and nucleotide exchange. Immobilization of the converter enables RuvB to convert the ATP-contained energy into a lever motion, pulling 2 nucleotides of DNA out of the RuvA tetramer per ATP hydrolyzed, thus driving DNA branch migration. The RuvB motors rotate together with the DNA substrate, which together with the progressing nucleotide cycle form the mechanistic basis for DNA recombination by continuous HJ branch migration. Branch migration allows RuvC to scan DNA until it finds its consensus sequence, where it cleaves and resolves cruciform DNA. The polypeptide is Holliday junction branch migration complex subunit RuvB (Campylobacter fetus subsp. fetus (strain 82-40)).